The primary structure comprises 550 residues: M-phase inducer phosphatase 1-B (550 aa).

Disordered stretches follow at residues 76–98 and 285–335; these read NLGD…GKVE and SPSM…QRRG. Positions 290-310 are enriched in basic and acidic residues; sequence EKLDRPMLKRPVRPLDSETPV. Residues 322 to 335 are compositionally biased toward polar residues; the sequence is LQPQEENFQPQRRG. The Rhodanese domain maps to 401-508; it reads LVEKIFIIDC…FFPEYKELCE (108 aa). Cys457 is an active-site residue.

This sequence belongs to the MPI phosphatase family.

It carries out the reaction O-phospho-L-tyrosyl-[protein] + H2O = L-tyrosyl-[protein] + phosphate. In terms of biological role, tyrosine protein phosphatase which functions as a dosage-dependent inducer of mitotic progression. Directly dephosphorylates CDK1 and stimulates its kinase activity. The protein is M-phase inducer phosphatase 1-B (cdc25-1-b) of Xenopus laevis (African clawed frog).